Reading from the N-terminus, the 122-residue chain is uncharacterized protein (122 aa).

The signal sequence occupies residues 1-18 (MYSMAFLASSGLVANSSA). Residue N15 is glycosylated (N-linked (GlcNAc...) asparagine).

This is an uncharacterized protein from Saccharomyces cerevisiae (strain ATCC 204508 / S288c) (Baker's yeast).